Consider the following 633-residue polypeptide: DNA polymerase DpoZ (633 aa).

Belongs to the DNA polymerase type-A family. DpoZ subfamily.

The catalysed reaction is DNA(n) + a 2'-deoxyribonucleoside 5'-triphosphate = DNA(n+1) + diphosphate. It catalyses the reaction dZTP + DNA(n) = DNA(n)-Z + diphosphate. In terms of biological role, DNA polymerase that preferentially incorporates the non-canonical base aminoadenine/dZTP instead of adenine into the synthesized DNA. More efficient in using dZTP instead of dATP as a substrate. In addition to this preference for dZTP, the phage also encodes a dATP triphosphohydrolase that removes dATP and its precursor dADP from the nucleotide pool of the host. The protein is DNA polymerase DpoZ (dpoZ) of Vibrio phage phiVC8.